The sequence spans 239 residues: Sugar fermentation stimulation protein homolog (239 aa).

It belongs to the SfsA family.

The protein is Sugar fermentation stimulation protein homolog of Caulobacter vibrioides (strain ATCC 19089 / CIP 103742 / CB 15) (Caulobacter crescentus).